The primary structure comprises 191 residues: UPF0149 protein VCM66_2399 (191 aa).

Belongs to the UPF0149 family.

The chain is UPF0149 protein VCM66_2399 from Vibrio cholerae serotype O1 (strain M66-2).